A 496-amino-acid chain; its full sequence is NADH-quinone oxidoreductase subunit N (496 aa).

A run of 14 helical transmembrane segments spans residues 8–28 (LLST…VGLI), 37–57 (MFPL…YDFF), 73–93 (QFAG…VLST), 110–130 (LLLL…LLTM), 131–151 (YVGL…HPND), 162–182 (LVLG…IYGL), 203–223 (TILA…LVPF), 235–255 (PAPI…AALV), 271–291 (GLIL…LMAF), 300–320 (MAYS…AVSI), 341–361 (GVLF…AVIT), 386–406 (AAVL…AGFV), 421–441 (VWIA…YLSI), and 464–484 (FGMI…TPLA).

This sequence belongs to the complex I subunit 2 family. As to quaternary structure, NDH-1 is composed of 14 different subunits. Subunits NuoA, H, J, K, L, M, N constitute the membrane sector of the complex.

Its subcellular location is the cell membrane. The catalysed reaction is a quinone + NADH + 5 H(+)(in) = a quinol + NAD(+) + 4 H(+)(out). NDH-1 shuttles electrons from NADH, via FMN and iron-sulfur (Fe-S) centers, to quinones in the respiratory chain. The immediate electron acceptor for the enzyme in this species is believed to be a menaquinone. Couples the redox reaction to proton translocation (for every two electrons transferred, four hydrogen ions are translocated across the cytoplasmic membrane), and thus conserves the redox energy in a proton gradient. This Desulfitobacterium hafniense (strain DSM 10664 / DCB-2) protein is NADH-quinone oxidoreductase subunit N.